The primary structure comprises 171 residues: Endoribonuclease YbeY (171 aa).

Histidine 130, histidine 134, and histidine 140 together coordinate Zn(2+).

This sequence belongs to the endoribonuclease YbeY family. The cofactor is Zn(2+).

Its subcellular location is the cytoplasm. In terms of biological role, single strand-specific metallo-endoribonuclease involved in late-stage 70S ribosome quality control and in maturation of the 3' terminus of the 16S rRNA. The polypeptide is Endoribonuclease YbeY (Neisseria gonorrhoeae (strain ATCC 700825 / FA 1090)).